The primary structure comprises 473 residues: 3-isopropylmalate dehydratase large subunit (473 aa).

Cys-348, Cys-408, and Cys-411 together coordinate [4Fe-4S] cluster. Residues Gly-421 to Lys-440 form a disordered region.

This sequence belongs to the aconitase/IPM isomerase family. LeuC type 1 subfamily. Heterodimer of LeuC and LeuD. The cofactor is [4Fe-4S] cluster.

The enzyme catalyses (2R,3S)-3-isopropylmalate = (2S)-2-isopropylmalate. It functions in the pathway amino-acid biosynthesis; L-leucine biosynthesis; L-leucine from 3-methyl-2-oxobutanoate: step 2/4. Catalyzes the isomerization between 2-isopropylmalate and 3-isopropylmalate, via the formation of 2-isopropylmaleate. The chain is 3-isopropylmalate dehydratase large subunit from Haloferax volcanii (strain ATCC 29605 / DSM 3757 / JCM 8879 / NBRC 14742 / NCIMB 2012 / VKM B-1768 / DS2) (Halobacterium volcanii).